The chain runs to 288 residues: 4-diphosphocytidyl-2-C-methyl-D-erythritol kinase (288 aa).

The active site involves lysine 11. 100 to 110 serves as a coordination point for ATP; the sequence is PTSAGLGSGSS. Aspartate 140 is an active-site residue.

Belongs to the GHMP kinase family. IspE subfamily.

It carries out the reaction 4-CDP-2-C-methyl-D-erythritol + ATP = 4-CDP-2-C-methyl-D-erythritol 2-phosphate + ADP + H(+). The protein operates within isoprenoid biosynthesis; isopentenyl diphosphate biosynthesis via DXP pathway; isopentenyl diphosphate from 1-deoxy-D-xylulose 5-phosphate: step 3/6. Catalyzes the phosphorylation of the position 2 hydroxy group of 4-diphosphocytidyl-2C-methyl-D-erythritol. The polypeptide is 4-diphosphocytidyl-2-C-methyl-D-erythritol kinase (Wolbachia sp. subsp. Brugia malayi (strain TRS)).